The primary structure comprises 527 residues: Cytokinin dehydrogenase 6 (527 aa).

Positions 1–22 (MAARCSIAFMVMASCLSVVVSG) are cleaved as a signal peptide. One can recognise an FAD-binding PCMH-type domain in the interval 55-236 (VAAAPEAVLH…TRARIGLEPA (182 aa)). The FAD site is built by Gly91 and Gly93. Pros-8alpha-FAD histidine is present on His94. FAD-binding residues include Ser95 and Gln99. Residue Asn121 is glycosylated (N-linked (GlcNAc...) asparagine). FAD is bound by residues Asp160, Thr165, Ser171, Ile175, and Ile226. N-linked (GlcNAc...) asparagine glycans are attached at residues Asn280 and Asn323. The FAD site is built by Tyr475, Ser510, and Gln513.

Belongs to the oxygen-dependent FAD-linked oxidoreductase family. As to quaternary structure, monomer. Requires FAD as cofactor.

The protein resides in the secreted. The protein localises to the extracellular space. The catalysed reaction is N(6)-dimethylallyladenine + A + H2O = 3-methyl-2-butenal + adenine + AH2. Functionally, catalyzes the oxidation of cytokinins, a family of N(6)-substituted adenine derivatives that are plant hormones, where the substituent is an isopentenyl group. The chain is Cytokinin dehydrogenase 6 (CKX6) from Oryza sativa subsp. japonica (Rice).